Here is a 133-residue protein sequence, read N- to C-terminus: ATP synthase epsilon chain (133 aa).

Belongs to the ATPase epsilon chain family. In terms of assembly, F-type ATPases have 2 components, CF(1) - the catalytic core - and CF(0) - the membrane proton channel. CF(1) has five subunits: alpha(3), beta(3), gamma(1), delta(1), epsilon(1). CF(0) has three main subunits: a, b and c.

It localises to the cell membrane. In terms of biological role, produces ATP from ADP in the presence of a proton gradient across the membrane. This Halalkalibacterium halodurans (strain ATCC BAA-125 / DSM 18197 / FERM 7344 / JCM 9153 / C-125) (Bacillus halodurans) protein is ATP synthase epsilon chain.